We begin with the raw amino-acid sequence, 267 residues long: Tryptophan synthase alpha chain (267 aa).

Catalysis depends on proton acceptor residues Glu49 and Asp60.

Belongs to the TrpA family. As to quaternary structure, tetramer of two alpha and two beta chains.

It carries out the reaction (1S,2R)-1-C-(indol-3-yl)glycerol 3-phosphate + L-serine = D-glyceraldehyde 3-phosphate + L-tryptophan + H2O. The protein operates within amino-acid biosynthesis; L-tryptophan biosynthesis; L-tryptophan from chorismate: step 5/5. Its function is as follows. The alpha subunit is responsible for the aldol cleavage of indoleglycerol phosphate to indole and glyceraldehyde 3-phosphate. In Acinetobacter baumannii (strain AB307-0294), this protein is Tryptophan synthase alpha chain.